A 294-amino-acid polypeptide reads, in one-letter code: 33 kDa chaperonin (294 aa).

Cystine bridges form between C238–C240 and C271–C274.

The protein belongs to the HSP33 family. Post-translationally, under oxidizing conditions two disulfide bonds are formed involving the reactive cysteines. Under reducing conditions zinc is bound to the reactive cysteines and the protein is inactive.

It is found in the cytoplasm. Redox regulated molecular chaperone. Protects both thermally unfolding and oxidatively damaged proteins from irreversible aggregation. Plays an important role in the bacterial defense system toward oxidative stress. The chain is 33 kDa chaperonin from Caldanaerobacter subterraneus subsp. tengcongensis (strain DSM 15242 / JCM 11007 / NBRC 100824 / MB4) (Thermoanaerobacter tengcongensis).